The sequence spans 525 residues: GMP synthase [glutamine-hydrolyzing] (525 aa).

The Glutamine amidotransferase type-1 domain maps to 9-207; it reads RILILDFGSQ…VRDICQCEAL (199 aa). Residue Cys86 is the Nucleophile of the active site. Catalysis depends on residues His181 and Glu183. Residues 208 to 400 form the GMPS ATP-PPase domain; the sequence is WTPAKIIDDA…LGLPYDMLYR (193 aa). 235 to 241 lines the ATP pocket; the sequence is SGGVDSS.

As to quaternary structure, homodimer.

The catalysed reaction is XMP + L-glutamine + ATP + H2O = GMP + L-glutamate + AMP + diphosphate + 2 H(+). It participates in purine metabolism; GMP biosynthesis; GMP from XMP (L-Gln route): step 1/1. In terms of biological role, catalyzes the synthesis of GMP from XMP. The protein is GMP synthase [glutamine-hydrolyzing] of Enterobacter sp. (strain 638).